Consider the following 273-residue polypeptide: Homeobox protein HMX2 (273 aa).

The disordered stretch occupies residues 1–152 (MGSKEDAGKG…RQAGAAKKKT (152 aa)). The span at 93 to 102 (KGSGGSGPGG) shows a compositional bias: gly residues. Residues 114–123 (SDFKEEKERL) are compositionally biased toward basic and acidic residues. A DNA-binding region (homeobox) is located at residues 149-208 (KKKTRTVFSRSQVYQLESTFDMKRYLSSSERACLASSLQLTETQVKTWFQNRRNKWKRQL).

The protein belongs to the HMX homeobox family.

The protein resides in the nucleus. Transcription factor involved in specification of neuronal cell types and which is required for inner ear and hypothalamus development. In Homo sapiens (Human), this protein is Homeobox protein HMX2 (HMX2).